The sequence spans 203 residues: MKALTARQQQVYDLVRDHISQTGMPPTRAEIASQLGFRSPNAAEEHLKALARKGVIEIVSGASRGIRLLLEEEPEGLPLIGRVAAGEPLLAQEHIESHYQVDPMLFKPSADFLLRVNGMSMKDIGIMDGDLLAVHKTQDVHNGQVIVARIEDEVTVKRFKKVGSKIELHAENPEFSPIIVDLREQSFTVEGLAVGVIRNGEWL.

The H-T-H motif DNA-binding region spans 28-48; sequence RAEIASQLGFRSPNAAEEHLK. Residues S120 and K157 each act as for autocatalytic cleavage activity in the active site.

It belongs to the peptidase S24 family. In terms of assembly, homodimer.

The catalysed reaction is Hydrolysis of Ala-|-Gly bond in repressor LexA.. In terms of biological role, represses a number of genes involved in the response to DNA damage (SOS response), including recA and lexA. Binds to the 16 bp palindromic sequence 5'-CTGTATATATATACAG-3'. In the presence of single-stranded DNA, RecA interacts with LexA causing an autocatalytic cleavage which disrupts the DNA-binding part of LexA, leading to derepression of the SOS regulon and eventually DNA repair. The polypeptide is LexA repressor (Proteus mirabilis (strain HI4320)).